The chain runs to 93 residues: Small ribosomal subunit protein bS20c (93 aa).

It belongs to the bacterial ribosomal protein bS20 family.

The protein resides in the plastid. The protein localises to the chloroplast. In terms of biological role, binds directly to 16S ribosomal RNA. The chain is Small ribosomal subunit protein bS20c from Phaeodactylum tricornutum (strain CCAP 1055/1).